A 430-amino-acid polypeptide reads, in one-letter code: Serine/threonine-protein kinase Sgk1 (430 aa).

Positions 1–60 (MTVKTEAARSTLTYSRMRGMVAILIAFMKQRRMGLNDFIQKLANNSYACKHPEVQSYLKI) are necessary for localization to the mitochondria. The disordered stretch occupies residues 66-92 (PELMNANPSPPPSPSQQINLGPSSNPH). Residue S74 is modified to Phosphoserine. Residue S78 is modified to Phosphoserine; by MAPK7. Residues 81 to 91 (QQINLGPSSNP) show a composition bias toward polar residues. The region spanning 98–354 (FHFLKVIGKG…FMEIKSHIFF (257 aa)) is the Protein kinase domain. ATP contacts are provided by residues 104-112 (IGKGSFGKV) and K127. The Nuclear localization signal signature appears at 131-141 (KKAILKKKEEK). The active-site Proton acceptor is D222. Position 256 is a phosphothreonine; by PDPK1 (T256). The AGC-kinase C-terminal domain occupies 355–430 (SLINWDDLIN…SYAPPMDSFL (76 aa)). T368 bears the Phosphothreonine; by PKA mark. S396, S400, and S421 each carry phosphoserine.

Belongs to the protein kinase superfamily. AGC Ser/Thr protein kinase family. Homodimer; disulfide-linked. Forms a trimeric complex with FBXW7 and NOTCH1. Interacts with MAPK3/ERK1, MAPK1/ERK2, MAP2K1/MEK1, MAP2K2/MEK2, NEDD4, NEDD4L, MAPK7, CREB1, SLC9A3R2/NHERF2 and KCNJ1/ROMK1. Associates with the mammalian target of rapamycin complex 2 (mTORC2) via an interaction with MAPKAP1/SIN1. Interacts with MAPT/TAU. Regulated by phosphorylation. Activated by phosphorylation on Ser-421 by mTORC2, transforming it into a substrate for PDPK1 which phosphorylates it on Thr-256. Phosphorylation on Ser-396 and Ser-400 are also essential for its activity. Phosphorylation on Ser-78 by MAPK7 is required for growth factor-induced cell cycle progression. In terms of processing, ubiquitinated by NEDD4L; which promotes proteasomal degradation. Ubiquitinated by SYVN1 at the endoplasmic reticulum; which promotes rapid proteasomal degradation and maintains a high turnover rate in resting cells. In terms of tissue distribution, expressed in most tissues with highest levels in the ovary, thymus and lung. In the kidney, expressed within glomeruli of the cortex, at low levels in outer medulla and moderate levels in inner medulla and papilla.

Its subcellular location is the cytoplasm. The protein resides in the nucleus. The protein localises to the endoplasmic reticulum membrane. It localises to the cell membrane. It is found in the mitochondrion. It catalyses the reaction L-seryl-[protein] + ATP = O-phospho-L-seryl-[protein] + ADP + H(+). The catalysed reaction is L-threonyl-[protein] + ATP = O-phospho-L-threonyl-[protein] + ADP + H(+). Its activity is regulated as follows. Two specific sites, one in the kinase domain (Thr-256) and the other in the C-terminal regulatory region (Ser-421), need to be phosphorylated for its full activation. Phosphorylation at Ser-396 and Ser-400 are also essential for its activity. Activated by WNK1, WNK2, WNK3 and WNK4. In terms of biological role, serine/threonine-protein kinase which is involved in the regulation of a wide variety of ion channels, membrane transporters, cellular enzymes, transcription factors, neuronal excitability, cell growth, proliferation, survival, migration and apoptosis. Plays an important role in cellular stress response. Contributes to regulation of renal Na(+) retention, renal K(+) elimination, salt appetite, gastric acid secretion, intestinal Na(+)/H(+) exchange and nutrient transport, insulin-dependent salt sensitivity of blood pressure, salt sensitivity of peripheral glucose uptake, cardiac repolarization and memory consolidation. Up-regulates Na(+) channels: SCNN1A/ENAC, SCN5A and ASIC1/ACCN2, K(+) channels: KCNJ1/ROMK1, KCNA1-5, KCNQ1-5 and KCNE1, epithelial Ca(2+) channels: TRPV5 and TRPV6, chloride channels: BSND, CLCN2 and CFTR, glutamate transporters: SLC1A3/EAAT1, SLC1A2 /EAAT2, SLC1A1/EAAT3, SLC1A6/EAAT4 and SLC1A7/EAAT5, amino acid transporters: SLC1A5/ASCT2, SLC38A1/SN1 and SLC6A19, creatine transporter: SLC6A8, Na(+)/dicarboxylate cotransporter: SLC13A2/NADC1, Na(+)-dependent phosphate cotransporter: SLC34A2/NAPI-2B, glutamate receptor: GRIK2/GLUR6. Up-regulates carriers: SLC9A3/NHE3, SLC12A1/NKCC2, SLC12A3/NCC, SLC5A3/SMIT, SLC2A1/GLUT1, SLC5A1/SGLT1 and SLC15A2/PEPT2. Regulates enzymes: GSK3A/B, PMM2 and Na(+)/K(+) ATPase, and transcription factors: CTNNB1 and nuclear factor NF-kappa-B. Stimulates sodium transport into epithelial cells by enhancing the stability and expression of SCNN1A/ENAC. This is achieved by phosphorylating the NEDD4L ubiquitin E3 ligase, promoting its interaction with 14-3-3 proteins, thereby preventing it from binding to SCNN1A/ENAC and targeting it for degradation. Regulates store-operated Ca(+2) entry (SOCE) by stimulating ORAI1 and STIM1. Regulates KCNJ1/ROMK1 directly via its phosphorylation or indirectly via increased interaction with SLC9A3R2/NHERF2. Phosphorylates MDM2 and activates MDM2-dependent ubiquitination of p53/TP53. Phosphorylates SLC2A4/GLUT4 and up-regulates its activity. Phosphorylates APBB1/FE65 and promotes its localization to the nucleus. Phosphorylates FBXW7 and plays an inhibitory role in the NOTCH1 signaling. Phosphorylates FOXO1 resulting in its relocalization from the nucleus to the cytoplasm. Phosphorylates FOXO3, promoting its exit from the nucleus and interference with FOXO3-dependent transcription. Phosphorylates BRAF and MAP3K3/MEKK3 and inhibits their activity. Phosphorylates SLC9A3/NHE3 in response to dexamethasone, resulting in its activation and increased localization at the cell membrane. Phosphorylates CREB1. Necessary for vascular remodeling during angiogenesis. Phosphorylates MAPT/TAU and mediates microtubule depolymerization and neurite formation in hippocampal neurons. Phosphorylates MAPK1/ERK2 and activates it by enhancing its interaction with MAP2K1/MEK1 and MAP2K2/MEK2. May also play an important role in the development of particular groups of neurons in the postnatal brain. This is Serine/threonine-protein kinase Sgk1 (Sgk1) from Rattus norvegicus (Rat).